The primary structure comprises 501 residues: Cytochrome P450 90A3 (501 aa).

Residues 2-22 (AAAALLLLAAAAAIVVVAMVL) form a helical membrane-spanning segment. A heme-binding site is contributed by C446.

The protein belongs to the cytochrome P450 family. Heme is required as a cofactor. As to expression, highly expressed in shoot apex and inflorenscence. Expressed in roots, stems, leaf blades and leaf sheaths.

The protein localises to the membrane. It functions in the pathway plant hormone biosynthesis; brassinosteroid biosynthesis. Functionally, catalyzes the C23-alpha-hydroxylation step in brassinosteroid biosynthesis. Converts 6-deoxocathasterone (6-deoxoCT) to 6-deoxoteasterone (6-deoxoTE) in the late C6-oxidation pathway and cathasterone (CT) to teasterone (TE) in the early C6-oxidation pathway of brassinolide (BL) biosynthesis. In Oryza sativa subsp. japonica (Rice), this protein is Cytochrome P450 90A3.